Reading from the N-terminus, the 315-residue chain is Eukaryotic translation initiation factor 2 subunit 1 (315 aa).

Residues 17-88 (EDVVMVNVRS…EKGYIDLSKR (72 aa)) enclose the S1 motif domain. Phosphoserine occurs at positions 49 and 52. The segment at 292-315 (RLERENAEVDGDDDAEEMEAKTED) is disordered. The span at 299–308 (EVDGDDDAEE) shows a compositional bias: acidic residues.

This sequence belongs to the eIF-2-alpha family. As to quaternary structure, eukaryotic translation initiation factor 2 eIF2 is a heterotrimeric complex composed of an alpha (EIF2S1), a beta (EIF2S2) and a gamma (EIF2S3) chain. Post-translationally, phosphorylation at Ser-49 and Ser-52 stabilizes the eIF-2/GDP/eIF2B complex and prevents GDP/GTP exchange reaction, thus impairing the recycling of eIF-2 between successive rounds of initiation and leading to global inhibition of translation, while concomitantly initiating the preferential translation of integrated stress response (ISR)-specific mRNAs.

Its subcellular location is the cytoplasm. The protein localises to the stress granule. It localises to the cytosol. Activity is regulated by phosphorylation at Ser-49 and Ser-52, which stabilizes the eIF2/GDP/eIF2B complex and prevents the eIF2B-mediated exchange of GDP for GTP, thereby preventing the formation of the 43S pre-initiation complex (43S PIC). This results in the global attenuation of 5' cap-dependent protein synthesis and concomitant translation of ISR-specific mRNAs that contain a short upstream open reading frame (uORF) in their 5' UTR. Member of the eIF2 complex that functions in the early steps of protein synthesis by forming a ternary complex with GTP and initiator tRNA. This complex binds to a 40S ribosomal subunit, followed by mRNA binding to form a 43S pre-initiation complex. Junction of the 60S ribosomal subunit to form the 80S initiation complex is preceded by hydrolysis of the GTP bound to eIF2 and release of an eIF2-GDP binary complex. In order for eIF2 to recycle and catalyze another round of initiation, the GDP bound to eIF2 must exchange with GTP by way of a reaction catalyzed by eIF2B. EIF2S1/eIF2-alpha is a key component of the integrated stress response (ISR), required for adaptation to various stress: phosphorylation by metabolic-stress sensing protein kinases (EIF2AK1/HRI, EIF2AK2/PKR, EIF2AK3/PERK and EIF2AK4/GCN2) in response to stress converts EIF2S1/eIF2-alpha in a global protein synthesis inhibitor, leading to a attenuation of cap-dependent translation, while concomitantly initiating the preferential translation of ISR-specific mRNAs, such as the transcriptional activators ATF4 and QRICH1. The sequence is that of Eukaryotic translation initiation factor 2 subunit 1 (EIF2S1) from Gallus gallus (Chicken).